A 67-amino-acid chain; its full sequence is Large ribosomal subunit protein eL24 (67 aa).

Residues C7, C10, C33, and C37 each contribute to the Zn(2+) site. The C4-type zinc finger occupies 7–37 (CSYCGKPFEPGTGKMFVRNDGRVLFFCSRKC).

This sequence belongs to the eukaryotic ribosomal protein eL24 family. As to quaternary structure, part of the 50S ribosomal subunit. Forms a cluster with proteins L3 and L14. Requires Zn(2+) as cofactor.

Binds to the 23S rRNA. This Pyrococcus abyssi (strain GE5 / Orsay) protein is Large ribosomal subunit protein eL24.